The sequence spans 718 residues: U-box domain-containing protein 5 (718 aa).

A U-box domain is found at 218 to 292 (TLPEKFKCTL…SEWCAKNGLD (75 aa)). ARM repeat units follow at residues 493–532 (PHGP…NLSS), 534–571 (MEIC…NLCS), and 573–613 (EKGR…QLCV). Residues 662-704 (KEEEEEVSSRPEGRTTASPTSQVVTPVTHPEPVKITPSPKKSG) form a disordered region. The span at 676 to 686 (TTASPTSQVVT) shows a compositional bias: polar residues.

It catalyses the reaction S-ubiquitinyl-[E2 ubiquitin-conjugating enzyme]-L-cysteine + [acceptor protein]-L-lysine = [E2 ubiquitin-conjugating enzyme]-L-cysteine + N(6)-ubiquitinyl-[acceptor protein]-L-lysine.. It participates in protein modification; protein ubiquitination. In terms of biological role, functions as an E3 ubiquitin ligase. This chain is U-box domain-containing protein 5 (PUB5), found in Arabidopsis thaliana (Mouse-ear cress).